Consider the following 141-residue polypeptide: Ribonuclease VapC2 (141 aa).

In terms of domain architecture, PINc spans 7–129 (LIDKSALVRL…FDAIAALTGQ (123 aa)). Residues aspartate 99, aspartate 117, and aspartate 119 each coordinate Mg(2+).

It belongs to the PINc/VapC protein family. Probably active as a homodimer. It depends on Mg(2+) as a cofactor.

Its function is as follows. Toxic component of a type II toxin-antitoxin (TA) system. Acts as an RNase. All its toxic effects are neutralized by coexpression with cognate antitoxin VapB2. This chain is Ribonuclease VapC2, found in Mycobacterium tuberculosis (strain CDC 1551 / Oshkosh).